Reading from the N-terminus, the 187-residue chain is Ribosome-recycling factor (187 aa).

The protein belongs to the RRF family.

The protein localises to the cytoplasm. Its function is as follows. Responsible for the release of ribosomes from messenger RNA at the termination of protein biosynthesis. May increase the efficiency of translation by recycling ribosomes from one round of translation to another. The sequence is that of Ribosome-recycling factor from Ruegeria pomeroyi (strain ATCC 700808 / DSM 15171 / DSS-3) (Silicibacter pomeroyi).